Reading from the N-terminus, the 201-residue chain is 3-isopropylmalate dehydratase small subunit (201 aa).

It belongs to the LeuD family. LeuD type 1 subfamily. In terms of assembly, heterodimer of LeuC and LeuD.

The catalysed reaction is (2R,3S)-3-isopropylmalate = (2S)-2-isopropylmalate. It functions in the pathway amino-acid biosynthesis; L-leucine biosynthesis; L-leucine from 3-methyl-2-oxobutanoate: step 2/4. Its function is as follows. Catalyzes the isomerization between 2-isopropylmalate and 3-isopropylmalate, via the formation of 2-isopropylmaleate. This is 3-isopropylmalate dehydratase small subunit from Xanthobacter autotrophicus (strain ATCC BAA-1158 / Py2).